A 551-amino-acid polypeptide reads, in one-letter code: uncharacterized protein (551 aa).

Transmembrane regions (helical) follow at residues 1-21 (MIAY…IVNS), 25-45 (WTYF…LMVS), 99-119 (GALF…FGFN), 124-144 (LGVL…SLMW), 266-286 (FAFL…GVFY), and 490-510 (FLDL…SAED).

The protein resides in the cell membrane. This is an uncharacterized protein from Haemophilus influenzae (strain ATCC 51907 / DSM 11121 / KW20 / Rd).